Reading from the N-terminus, the 348-residue chain is EGF-like domain containing protein 1 (348 aa).

The first 19 residues, 1–19 (MFYLSTFMTIVISLSLVSC), serve as a signal peptide directing secretion. The 33-residue stretch at 60–92 (TGSDCKVTCQNNGRCYDGNKCLCSSDYTGHLCE) folds into the EGF-like domain. 3 disulfide bridges follow: C64/C74, C68/C80, and C82/C91. The ZP domain occupies 99–342 (RCTLDGVVFE…PTCAAPAVSQ (244 aa)).

Prismatic layer of shell (at protein level). Expressed primarily in the mantle with highest level in the mantle edge and lower level in the mantle pallium.

Its subcellular location is the secreted. The protein is EGF-like domain containing protein 1 of Margaritifera margaritifera (Freshwater pearl mussel).